We begin with the raw amino-acid sequence, 216 residues long: PEP-dependent dihydroxyacetone kinase 2, ADP-binding subunit DhaL (216 aa).

Residues 9–210 (AFFGHVLQDM…SWMLMNVILE (202 aa)) form the DhaL domain. Mg(2+)-binding residues include Asp-33, Asp-38, and Asp-40. ADP is bound by residues 41-44 (HGIN), 84-85 (AS), Gly-126, Met-135, Arg-182, and 195-197 (DPG).

As to quaternary structure, homodimer. The dihydroxyacetone kinase complex is composed of a homodimer of DhaM, a homodimer of DhaK and the subunit DhaL. The cofactor is Mg(2+).

It is found in the cytoplasm. It catalyses the reaction dihydroxyacetone + phosphoenolpyruvate = dihydroxyacetone phosphate + pyruvate. Its pathway is polyol metabolism; glycerol degradation. Functionally, ADP-binding subunit of the dihydroxyacetone kinase, which is responsible for the phosphoenolpyruvate (PEP)-dependent phosphorylation of dihydroxyacetone. DhaL-ADP is converted to DhaL-ATP via a phosphoryl group transfer from DhaM and transmits it to dihydroxyacetone binds to DhaK. The protein is PEP-dependent dihydroxyacetone kinase 2, ADP-binding subunit DhaL of Listeria innocua serovar 6a (strain ATCC BAA-680 / CLIP 11262).